Here is a 339-residue protein sequence, read N- to C-terminus: Biotin synthase (339 aa).

The Radical SAM core domain occupies 55 to 282 (NAVQLSTLLS…KAVVRLSAGR (228 aa)). [4Fe-4S] cluster-binding residues include Cys70, Cys74, and Cys77. Residues Cys114, Cys145, Cys205, and Arg277 each coordinate [2Fe-2S] cluster.

The protein belongs to the radical SAM superfamily. Biotin synthase family. In terms of assembly, homodimer. It depends on [4Fe-4S] cluster as a cofactor. The cofactor is [2Fe-2S] cluster.

It catalyses the reaction (4R,5S)-dethiobiotin + (sulfur carrier)-SH + 2 reduced [2Fe-2S]-[ferredoxin] + 2 S-adenosyl-L-methionine = (sulfur carrier)-H + biotin + 2 5'-deoxyadenosine + 2 L-methionine + 2 oxidized [2Fe-2S]-[ferredoxin]. Its pathway is cofactor biosynthesis; biotin biosynthesis; biotin from 7,8-diaminononanoate: step 2/2. Functionally, catalyzes the conversion of dethiobiotin (DTB) to biotin by the insertion of a sulfur atom into dethiobiotin via a radical-based mechanism. The protein is Biotin synthase of Burkholderia orbicola (strain MC0-3).